The following is an 87-amino-acid chain: Small ribosomal subunit protein bS20 (87 aa).

The disordered stretch occupies residues 1–21 (MANHKSAEKRARQTIKKTERN).

The protein belongs to the bacterial ribosomal protein bS20 family.

Binds directly to 16S ribosomal RNA. In Campylobacter jejuni subsp. jejuni serotype O:23/36 (strain 81-176), this protein is Small ribosomal subunit protein bS20.